A 189-amino-acid polypeptide reads, in one-letter code: Rho-related protein racM (189 aa).

12-19 (GDYGVGKT) is a binding site for GTP. The short motif at 35 to 43 (YVPTALDNF) is the Effector region element. GTP-binding positions include 60–64 (DTAGG) and 118–121 (TKID). Position 186 is a cysteine methyl ester (Cys-186). Cys-186 carries the S-geranylgeranyl cysteine lipid modification. Residues 187–189 (IIL) constitute a propeptide, removed in mature form.

The protein belongs to the small GTPase superfamily. Rho family.

It is found in the cell membrane. The protein is Rho-related protein racM (racM) of Dictyostelium discoideum (Social amoeba).